The following is a 461-amino-acid chain: Dihydrolipoyl dehydrogenase (461 aa).

FAD is bound by residues 34–42 (EEDQAGGTC), K51, and G114. A disulfide bridge links C42 with C47. Residues 177–181 (GGGVI), E200, and 261–264 (AIGR) contribute to the NAD(+) site. Residues D304 and A312 each coordinate FAD. H436 serves as the catalytic Proton acceptor.

The protein belongs to the class-I pyridine nucleotide-disulfide oxidoreductase family. FAD is required as a cofactor.

The protein localises to the cytoplasm. It catalyses the reaction N(6)-[(R)-dihydrolipoyl]-L-lysyl-[protein] + NAD(+) = N(6)-[(R)-lipoyl]-L-lysyl-[protein] + NADH + H(+). In terms of biological role, the branched-chain alpha-keto dehydrogenase complex catalyzes the overall conversion of alpha-keto acids to acyl-CoA and CO(2). It contains multiple copies of 3 enzymatic components: branched-chain alpha-keto acid decarboxylase (E1), lipoamide acyltransferase (E2) and lipoamide dehydrogenase (E3). This is Dihydrolipoyl dehydrogenase (lpdA) from Chlamydia pneumoniae (Chlamydophila pneumoniae).